A 225-amino-acid polypeptide reads, in one-letter code: MPDIEYLKKLALIGAVNKTVKVSSSEFHKHTGDSSKTAARKLKQLEKERLIERELVPGGQLIKMTEKGIEILKNEYVEYSRIFSSEPDTLELEGNVLKGLGEGQYYINIPGYRTQFEEKLHFIPFPGTLNVQLSENSSALRNRLREMPSVRIDGFNDGERTFGGGNCYPVRVEGIDAAVVVPDRTHYPSDLIEIIAPVKLRDALKLKDGDRVVTQLKKQGMEGQK.

A unknown region spans residues 1–89; that stretch reads MPDIEYLKKL…SRIFSSEPDT (89 aa). The interval 90–225 is riboflavin kinase; sequence LELEGNVLKG…LKKQGMEGQK (136 aa). 99–104 provides a ligand contact to CDP; that stretch reads GLGEGQ. 2 residues coordinate Mg(2+): Thr128 and Asn130. Residues Thr185 and Glu193 each coordinate FMN. 198–201 is a binding site for CDP; that stretch reads VKLR.

It belongs to the archaeal riboflavin kinase family. Requires Mg(2+) as cofactor.

It carries out the reaction riboflavin + CTP = CDP + FMN + H(+). It participates in cofactor biosynthesis; FMN biosynthesis; FMN from riboflavin (CTP route): step 1/1. Its function is as follows. Catalyzes the CTP-dependent phosphorylation of riboflavin (vitamin B2) to form flavin mononucleotide (FMN). In Methanosarcina mazei (strain ATCC BAA-159 / DSM 3647 / Goe1 / Go1 / JCM 11833 / OCM 88) (Methanosarcina frisia), this protein is Riboflavin kinase (ribK).